The sequence spans 33 residues: Protamine TP16 (33 aa).

Positions 1–33 are disordered; that stretch reads MPRRRRSSSRPVRRRRRARVSRRRRRRGRRRRR.

Testis.

It is found in the nucleus. Its subcellular location is the chromosome. In terms of biological role, protamines substitute for histones in the chromatin of sperm during the haploid phase of spermatogenesis. They compact sperm DNA into a highly condensed, stable and inactive complex. In Oncorhynchus mykiss (Rainbow trout), this protein is Protamine TP16.